Here is a 183-residue protein sequence, read N- to C-terminus: Dermatopontin (183 aa).

The residue at position 1 (Gln1) is a Pyrrolidone carboxylic acid. Tyr5 bears the Sulfotyrosine mark. Tandem repeats lie at residues Pro8–Pro61, Asp52–Tyr57, Thr62–Tyr117, and Asp107–Phe112. A 2 X 53-55 AA tandem repeats region spans residues Pro8–Tyr117. Intrachain disulfides connect Cys32–Cys59, Cys72–Cys114, Cys88–Cys115, Cys121–Cys178, and Cys125–Cys171. The 3 X 6 AA tandem repeats of D-R-[EQ]-W-[NQK]-[FY] stretch occupies residues Asp52–Phe168. Residues Tyr144, Tyr146, Tyr148, and Tyr149 each carry the sulfotyrosine modification. The stretch at Asp163–Phe168 is one 2-3 repeat. Residue Tyr176 is modified to Sulfotyrosine.

Belongs to the dermatopontin family. Interacts with TGFB1, DCN and collagen. Sulfated on tyrosine residue(s). In terms of tissue distribution, detected in skin, skeletal muscle, heart, lung, articular cartilage, long bone and calvaria. Smaller amounts detected in kidney. Not detected in brain, liver or spleen.

It is found in the secreted. It localises to the extracellular space. Its subcellular location is the extracellular matrix. Functionally, seems to mediate adhesion by cell surface integrin binding. May serve as a communication link between the dermal fibroblast cell surface and its extracellular matrix environment. Enhances TGFB1 activity. Inhibits cell proliferation. Accelerates collagen fibril formation, and stabilizes collagen fibrils against low-temperature dissociation. The polypeptide is Dermatopontin (DPT) (Sus scrofa (Pig)).